The sequence spans 425 residues: Inhibin beta A chain (425 aa).

The first 20 residues, 1–20 (MPLLWLRGFLLASCWIIVRS), serve as a signal peptide directing secretion. The propeptide occupies 21–309 (SPTPGSEGHS…EDHPHRRRRR (289 aa)). A glycan (N-linked (GlcNAc...) asparagine) is linked at N165. Positions 259-289 (KKKKKEEEGEGKKRDGEGGAGGDEEKEQSHR) are disordered. The segment covering 263 to 275 (KEEEGEGKKRDGE) has biased composition (basic and acidic residues). Cystine bridges form between C313/C321, C320/C390, C349/C422, and C353/C424.

Belongs to the TGF-beta family. Dimeric, linked by one or more disulfide bonds. Inhibin A is a dimer of alpha/INHA and beta-A/INHBA. Activin A is a homodimer of beta-A/INHBA. Activin AB is a dimer of beta-A/INHBA and beta-B/INHBB. Interacts with FST and FSTL3; these interactions prevent activin A interaction to its type II receptor. Activin A interacts with ACVR2A. Activin A interacts with BMPR2. Inhibin A interacts with ACVR1; this interaction creates a non-signaling complex (NSC) that inhibits ACVR1-mediated BMP signaling. Inhibin A interacts with ACVR2A.

Its subcellular location is the secreted. In terms of biological role, inhibins/activins are involved in regulating a number of diverse functions such as hypothalamic and pituitary hormone secretion, gonadal hormone secretion, germ cell development and maturation, erythroid differentiation, insulin secretion, nerve cell survival, embryonic axial development or bone growth, depending on their subunit composition. Functionally, activin A is a homodimer of INHBA that plays a role in several essential biological processes including embryonic development, stem cell maintenance and differentiation, haematopoiesis, cell proliferation and tissue fibrosis. Signals through type I (such as ACVR1B or ACVR1C) and type II receptors (such as ACVR2A, ACVR2B or BMPR2) which, upon ligand binding, phosphorylate SMAD2 and SMAD3 intracellular signaling mediators that form a complex with SMAD4, translocate to the nucleus and modulate gene expression. Can also activate alternative non-canonical intracellular signaling pathways including the p38 MAPK, extracellular signal-regulated kinases 1/2 (ERK1/2) and c-Jun N-terminal kinases (JNKs) to modulate cell migration and differentiation. Alternatively, promotes osteoblastic differentiation via ACVRL1-SMAD1/5/9 pathway. In addition, can engage the type I receptor ACVR1 to form an ACVR1-activin A-type II receptor non-signaling complex (NSC) that renders receptors unavailable for engagement with BMPs, hence resulting in an apparent inhibition of ACVR1-mediated BMP signaling. Its function is as follows. Inhibin A is a dimer of alpha/INHA and beta-A/INHBA that functions as a feedback regulator in the hypothalamic-pituitary-gonadal (HPG) axis. Inhibits the secretion of FSH from the anterior pituitary gland by acting on pituitary gonadotrope cells. Antagonizes activin A by binding to the proteoglycan, betaglycan, and forming a stable complex with and, thereby, sequestering type II activin receptors while excluding type I receptor. In Bos taurus (Bovine), this protein is Inhibin beta A chain (INHBA).